Here is a 572-residue protein sequence, read N- to C-terminus: Phosphoglucomutase-2 (572 aa).

Substrate contacts are provided by residues Thr-23, Arg-27, 126-127 (SH), and Lys-140. Ser-126 (phosphoserine intermediate) is an active-site residue. Ser-126 contributes to the Mg(2+) binding site. Asp-308, Asp-310, and Asp-312 together coordinate Mg(2+). Residues 312–313 (DR), Thr-373, 392–394 (EES), Lys-405, and Arg-527 each bind substrate.

Belongs to the phosphohexose mutase family. Requires Mg(2+) as cofactor. Phosphorylated via a calcium-dependent protein kinase.

The protein resides in the cytoplasm. It carries out the reaction alpha-D-glucose 1-phosphate = alpha-D-glucose 6-phosphate. May be involved in membrane fusion in exocytosis. The sequence is that of Phosphoglucomutase-2 (pp63-2) from Paramecium tetraurelia.